The following is a 204-amino-acid chain: CASP-like protein 4B4 (204 aa).

Residues 1–60 are Cytoplasmic-facing; it reads MSAAVAASSGAPAADVEKGAAAADANVDGGGAPAAAAASGEGVVSAVVRRWRRQDLLEKS. A helical membrane pass occupies residues 61 to 81; the sequence is GSALRVAAWAFSLLAFVVMGA. Over 82–98 the chain is Extracellular; that stretch reads NDHGDWRQFEHYEEYRY. Residues 99 to 119 form a helical membrane-spanning segment; it reads VVAIGVLAFIYTTLQLVRHGV. Topologically, residues 120 to 130 are cytoplasmic; it reads RLTGGQDLQGK. The helical transmembrane segment at 131–151 threads the bilayer; that stretch reads VAVLVDFAGDQVTAYLLMSAV. The Extracellular portion of the chain corresponds to 152 to 175; the sequence is SAAIPITNRMREGADNVFTDSSAA. A helical transmembrane segment spans residues 176 to 196; that stretch reads SISMAFFAFLCLALSALVSGF. The Cytoplasmic portion of the chain corresponds to 197–204; the sequence is KLAKQTYI.

It belongs to the Casparian strip membrane proteins (CASP) family. In terms of assembly, homodimer and heterodimers.

The protein localises to the cell membrane. The polypeptide is CASP-like protein 4B4 (Oryza sativa subsp. japonica (Rice)).